A 108-amino-acid chain; its full sequence is Phosphoribosyl-ATP pyrophosphatase (108 aa).

The protein belongs to the PRA-PH family.

It is found in the cytoplasm. The enzyme catalyses 1-(5-phospho-beta-D-ribosyl)-ATP + H2O = 1-(5-phospho-beta-D-ribosyl)-5'-AMP + diphosphate + H(+). It participates in amino-acid biosynthesis; L-histidine biosynthesis; L-histidine from 5-phospho-alpha-D-ribose 1-diphosphate: step 2/9. The sequence is that of Phosphoribosyl-ATP pyrophosphatase from Trichlorobacter lovleyi (strain ATCC BAA-1151 / DSM 17278 / SZ) (Geobacter lovleyi).